Reading from the N-terminus, the 810-residue chain is Volume-regulated anion channel subunit LRRC8A (810 aa).

Position 1 is an N-acetylmethionine (methionine 1). Over 1–22 the chain is Cytoplasmic; sequence MIPVTELRYFADTQPAYRILKP. A helical transmembrane segment spans residues 23 to 47; that stretch reads WWDVFTDYISIVMLMIAVFGGTLQV. The Extracellular portion of the chain corresponds to 48–123; sequence TQDKMICLPC…YENRLHWFAK (76 aa). 3 disulfide bridges follow: cysteine 54-cysteine 310, cysteine 57-cysteine 65, and cysteine 113-cysteine 295. Asparagine 66 and asparagine 83 each carry an N-linked (GlcNAc...) asparagine glycan. Residues 124–142 form a helical membrane-spanning segment; it reads YFPYLVLLHTLIFLACSNF. Residues 143–264 lie on the Cytoplasmic side of the membrane; that stretch reads WFKFPRTSSK…EEGDIVYRLY (122 aa). Threonine 200 is modified (phosphothreonine). A Phosphoserine modification is found at serine 202. Residue threonine 215 is modified to Phosphothreonine. Serine 217 carries the post-translational modification Phosphoserine. A helical membrane pass occupies residues 265–286; the sequence is MRQTIIKVIKFFLIICYTVYYV. Residues 287–316 lie on the Extracellular side of the membrane; that stretch reads HNIKFDVDCTVDIESLTGYRTYRCAHPLAT. Residues 317–341 form a helical membrane-spanning segment; that stretch reads LFKILASFYISLVIFYGLICMYTLW. Topologically, residues 342 to 810 are cytoplasmic; that stretch reads WMLRRSLKKY…RLWRADKEQA (469 aa). LRR repeat units lie at residues 399 to 422, 423 to 445, 447 to 468, 469 to 492, 493 to 515, 518 to 542, 543 to 565, 567 to 589, 590 to 613, 614 to 637, 639 to 661, 662 to 684, 686 to 707, 708 to 730, 732 to 753, 754 to 776, and 778 to 801; these read ENKL…RLTK, NAQD…VFDL, ELEV…IAQL, TGLK…AFLR, ENLR…IYSL, LEEL…GLRE, LKRL…VTDV, VHLQ…SLKK, MVNL…IFSL, HNLQ…SFQH, HRLT…IGNL, TNLE…LFYC, KLRY…IGLL, QNLQ…LFQC, KLRA…VGEL, TNLT…LGEC, and LLKR…VKER. A Di-leucine motif motif is present at residues 706-707; that stretch reads LL.

This sequence belongs to the LRRC8 family. Heterohexamer; oligomerizes with other LRRC8 proteins (LRRC8B, LRRC8C, LRRC8D and/or LRRC8E) to form a heterohexamer. Can form homohexamers in vitro, but these have lower conductance than heterohexamers. Detected in a channel complex that contains LRRC8A, LRRC8C and LRRC8E. In vivo, the subunit composition may depend primarily on expression levels, and heterooligomeric channels containing various proportions of the different LRRC8 proteins may coexist. Interact with GRB2. Interacts with NOX4; this interaction prevents the ubiquitin-mediated degradation of LRRC8A. Post-translationally, N-glycosylated.

It is found in the cell membrane. The protein resides in the lysosome membrane. The catalysed reaction is chloride(in) = chloride(out). It carries out the reaction iodide(out) = iodide(in). The enzyme catalyses taurine(out) = taurine(in). It catalyses the reaction L-aspartate(out) = L-aspartate(in). The catalysed reaction is L-glutamate(out) = L-glutamate(in). It carries out the reaction myo-inositol(out) = myo-inositol(in). The enzyme catalyses 2',3'-cGAMP(out) = 2',3'-cGAMP(in). With respect to regulation, inhibited by (4-[(2-butyl-6,7-dichloro-2-cyclopentyl-2,3-dihydro-1-oxo-1H-inden-5-yl)oxy]butanoic acid), which plugs the channel like a cork in a bottle by binding in the extracellular selectivity filter and sterically occluding ion conduction. Lipids may block conduction in closed heterohexameric channels. In terms of biological role, essential component of the volume-regulated anion channel (VRAC, also named VSOAC channel), an anion channel required to maintain a constant cell volume in response to extracellular or intracellular osmotic changes. The VRAC channel conducts iodide better than chloride and can also conduct organic osmolytes like taurine. Mediates efflux of amino acids, such as aspartate and glutamate, in response to osmotic stress. In complex with LRRC8C or LRRC8E, acts as a transporter of immunoreactive cyclic dinucleotide GMP-AMP (2'-3'-cGAMP), an immune messenger produced in response to DNA virus in the cytosol: mediates both import and export of 2'-3'-cGAMP, thereby promoting transfer of 2'-3'-cGAMP to bystander cells. In contrast, complexes containing LRRC8D inhibit transport of 2'-3'-cGAMP. Required for in vivo channel activity, together with at least one other family member (LRRC8B, LRRC8C, LRRC8D or LRRC8E); channel characteristics depend on the precise subunit composition. Can form functional channels by itself (in vitro). Involved in B-cell development: required for the pro-B cell to pre-B cell transition. Also required for T-cell development. Required for myoblast differentiation: VRAC activity promotes membrane hyperpolarization and regulates insulin-stimulated glucose metabolism and oxygen consumption. Also acts as a regulator of glucose-sensing in pancreatic beta cells: VRAC currents, generated in response to hypotonicity- or glucose-induced beta cell swelling, depolarize cells, thereby causing electrical excitation, leading to increase glucose sensitivity and insulin secretion. Also plays a role in lysosome homeostasis by forming functional lysosomal VRAC channels in response to low cytoplasmic ionic strength condition: lysosomal VRAC channels are necessary for the formation of large lysosome-derived vacuoles, which store and then expel excess water to maintain cytosolic water homeostasis. Acts as a key factor in NLRP3 inflammasome activation by modulating itaconate efflux and mitochondria function. The polypeptide is Volume-regulated anion channel subunit LRRC8A (Rattus norvegicus (Rat)).